A 156-amino-acid polypeptide reads, in one-letter code: Small ribosomal subunit protein uS7 (156 aa).

Belongs to the universal ribosomal protein uS7 family. As to quaternary structure, part of the 30S ribosomal subunit. Contacts proteins S9 and S11.

In terms of biological role, one of the primary rRNA binding proteins, it binds directly to 16S rRNA where it nucleates assembly of the head domain of the 30S subunit. Is located at the subunit interface close to the decoding center, probably blocks exit of the E-site tRNA. This Bacillus licheniformis (strain ATCC 14580 / DSM 13 / JCM 2505 / CCUG 7422 / NBRC 12200 / NCIMB 9375 / NCTC 10341 / NRRL NRS-1264 / Gibson 46) protein is Small ribosomal subunit protein uS7.